Reading from the N-terminus, the 590-residue chain is Kinetochore protein ndc-80 (590 aa).

Coiled coils occupy residues 269-342 and 450-525; these read KGNE…KQIH and ELET…MKLD.

Belongs to the NDC80/HEC1 family. As to quaternary structure, component of the NDC80 complex, which is composed of at least ndc-80 and him-10. The NDC80 complex interacts with knl-1. Interacts with the RZZ complex components rod-1 (via N-terminus) and zwl-1.

Its subcellular location is the nucleus. The protein localises to the chromosome. It localises to the centromere. The protein resides in the kinetochore. It is found in the cytoplasm. Its subcellular location is the cytoskeleton. Functionally, acts as a component of the essential kinetochore-associated ndc-80 complex, which is required for chromosome segregation in mitosis and meiosis and spindle checkpoint activity. Plays a role in kinetochore assembly and recruits the checkpoint protein mdf-2 and the spindly-like protein spdl-1 to unattached kinetochores. Mediates the formation of end-on kinetochore-microtubule attachments through recruitment of spdl-1. The ndc-80 complex synergistically enhances the affinity of the ska-1 complex for microtubules and may allow the ndc-80 complex to track depolymerizing microtubules. The sequence is that of Kinetochore protein ndc-80 (ndc-80) from Caenorhabditis elegans.